Consider the following 953-residue polypeptide: UPF0746 protein DDB_G0281301 (953 aa).

Residues 1-10 (MVNNKRKEIE) are compositionally biased toward basic and acidic residues. The disordered stretch occupies residues 1 to 23 (MVNNKRKEIENQENDNNDDNDGL). The span at 11 to 21 (NQENDNNDDND) shows a compositional bias: acidic residues. An SAP domain is found at 35–69 (YDSIRSKELQTIAKSLGLPIIGKKQEIYKRIEGYF).

The protein belongs to the UPF0746 family.

This chain is UPF0746 protein DDB_G0281301, found in Dictyostelium discoideum (Social amoeba).